A 100-amino-acid polypeptide reads, in one-letter code: Non-histone chromosomal protein HMG-14 (100 aa).

Positions Met1–Asp100 are disordered. Ser7 is modified (ADP-ribosylserine). Position 8 is a phosphoserine (Ser8). Residue Lys14 is modified to N6-acetyllysine. Ser21 bears the Phosphoserine; by RPS6KA5 mark. Ser25 carries the post-translational modification ADP-ribosylserine; alternate. Residue Ser25 is modified to Phosphoserine; alternate; by RPS6KA5. An N6-acetyllysine modification is found at Lys27. Composition is skewed to basic and acidic residues over residues Ala30 to Val50 and Glu69 to Glu85. Thr81 carries the phosphothreonine modification. At Lys82 the chain carries N6-acetyllysine. Ser86, Ser89, and Ser99 each carry phosphoserine.

In terms of assembly, interacts with transcriptional regulator SEHBP. Phosphorylation on Ser-21 and Ser-25 weakens binding to nucleosomes and increases the rate of H3 phosphorylation. Phosphorylation favors cytoplasmic localization.

It is found in the nucleus. The protein localises to the cytoplasm. Binds to the inner side of the nucleosomal DNA thus altering the interaction between the DNA and the histone octamer. May be involved in the process which maintains transcribable genes in a unique chromatin conformation. Inhibits the phosphorylation of nucleosomal histones H3 and H2A by RPS6KA5/MSK1 and RPS6KA3/RSK2. In Homo sapiens (Human), this protein is Non-histone chromosomal protein HMG-14 (HMGN1).